We begin with the raw amino-acid sequence, 127 residues long: Holo-[acyl-carrier-protein] synthase (127 aa).

The Mg(2+) site is built by Asp8 and Glu57.

It belongs to the P-Pant transferase superfamily. AcpS family. It depends on Mg(2+) as a cofactor.

It is found in the cytoplasm. It catalyses the reaction apo-[ACP] + CoA = holo-[ACP] + adenosine 3',5'-bisphosphate + H(+). Transfers the 4'-phosphopantetheine moiety from coenzyme A to a Ser of acyl-carrier-protein. The polypeptide is Holo-[acyl-carrier-protein] synthase (Ruthia magnifica subsp. Calyptogena magnifica).